Here is a 345-residue protein sequence, read N- to C-terminus: Biotin synthase (345 aa).

The Radical SAM core domain occupies 38-256 (RQVQVSTLLS…IAVARIMMPS (219 aa)). [4Fe-4S] cluster contacts are provided by cysteine 53, cysteine 57, and cysteine 60. Cysteine 97, cysteine 128, cysteine 188, and arginine 260 together coordinate [2Fe-2S] cluster.

Belongs to the radical SAM superfamily. Biotin synthase family. Homodimer. [4Fe-4S] cluster serves as cofactor. Requires [2Fe-2S] cluster as cofactor.

The enzyme catalyses (4R,5S)-dethiobiotin + (sulfur carrier)-SH + 2 reduced [2Fe-2S]-[ferredoxin] + 2 S-adenosyl-L-methionine = (sulfur carrier)-H + biotin + 2 5'-deoxyadenosine + 2 L-methionine + 2 oxidized [2Fe-2S]-[ferredoxin]. It participates in cofactor biosynthesis; biotin biosynthesis; biotin from 7,8-diaminononanoate: step 2/2. Functionally, catalyzes the conversion of dethiobiotin (DTB) to biotin by the insertion of a sulfur atom into dethiobiotin via a radical-based mechanism. The chain is Biotin synthase from Yersinia pestis bv. Antiqua (strain Antiqua).